The following is a 451-amino-acid chain: Tubulin alpha chain (451 aa).

Position 11 (Q11) interacts with GTP. K40 is modified (N6-acetyllysine). The GTP site is built by E71, G144, T145, T179, N206, and N228. Residue E71 coordinates Mg(2+). Residue E254 is part of the active site.

Belongs to the tubulin family. Dimer of alpha and beta chains. A typical microtubule is a hollow water-filled tube with an outer diameter of 25 nm and an inner diameter of 15 nM. Alpha-beta heterodimers associate head-to-tail to form protofilaments running lengthwise along the microtubule wall with the beta-tubulin subunit facing the microtubule plus end conferring a structural polarity. Microtubules usually have 13 protofilaments but different protofilament numbers can be found in some organisms and specialized cells. Requires Mg(2+) as cofactor. Post-translationally, undergoes a tyrosination/detyrosination cycle, the cyclic removal and re-addition of a C-terminal tyrosine residue by the enzymes tubulin tyrosine carboxypeptidase (TTCP) and tubulin tyrosine ligase (TTL), respectively. Acetylation of alpha chains at Lys-40 stabilizes microtubules and affects affinity and processivity of microtubule motors. This modification has a role in multiple cellular functions, ranging from cell motility, cell cycle progression or cell differentiation to intracellular trafficking and signaling.

It localises to the cytoplasm. It is found in the cytoskeleton. The catalysed reaction is GTP + H2O = GDP + phosphate + H(+). In terms of biological role, tubulin is the major constituent of microtubules, a cylinder consisting of laterally associated linear protofilaments composed of alpha- and beta-tubulin heterodimers. Microtubules grow by the addition of GTP-tubulin dimers to the microtubule end, where a stabilizing cap forms. Below the cap, tubulin dimers are in GDP-bound state, owing to GTPase activity of alpha-tubulin. This chain is Tubulin alpha chain (TUBA), found in Chlorella vulgaris (Green alga).